Reading from the N-terminus, the 420-residue chain is RING finger protein 39 (420 aa).

The segment at 88-135 adopts an RING-type zinc-finger fold; the sequence is CPLCGGSFEDPVLLACEHSFCRACLARRWGTPPATDTEASPTACPCCG. Disordered regions lie at residues 166-186 and 246-265; these read PGAR…CLDP and DRRS…DGPK. One can recognise a B30.2/SPRY domain in the interval 210-420; that stretch reads DDLPEDYPVV…APLRIVPAES (211 aa).

It is found in the cytoplasm. It catalyses the reaction S-ubiquitinyl-[E2 ubiquitin-conjugating enzyme]-L-cysteine + [acceptor protein]-L-lysine = [E2 ubiquitin-conjugating enzyme]-L-cysteine + N(6)-ubiquitinyl-[acceptor protein]-L-lysine.. It functions in the pathway protein modification; protein ubiquitination. Functionally, plays an inhibitory role in anti-RNA viral innate immunity by targeting the adapter DDX3X and promoting its 'Lys-48'-linked polyubiquitination. Alternatively, enhances the cGAS-STING pathway activation by promoting 'Lys-63'-linked ubiquitination of STING1, facilitating the STING1-TBK1 complex formation and STING1 activation. The polypeptide is RING finger protein 39 (RNF39) (Macaca mulatta (Rhesus macaque)).